Reading from the N-terminus, the 1087-residue chain is Fanconi-associated nuclease 1 homolog (1087 aa).

Disordered regions lie at residues 1–79 (MKSN…TPIK), 104–154 (FQKA…PNNL), 169–202 (EFLL…NNIT), 459–486 (TQNS…NNNI), 816–835 (ITSD…EKEN), and 842–871 (SVKK…EEEI). Residues 41 to 79 (TTTPPKTPTQPIRFTQNNNKENDKSNNNNNNNNTITPIK) are compositionally biased toward low complexity. A compositionally biased stretch (polar residues) spans 104–115 (FQKASTPSSPQI). 3 stretches are compositionally biased toward low complexity: residues 118-154 (KLPQ…PNNL), 182-202 (NTTT…NNIT), and 467-485 (NNNN…NNNN). Coiled coils occupy residues 419 to 490 (WKSK…KEYD) and 830 to 874 (KIEK…IIEI). Acidic residues predominate over residues 848-871 (EQEEEEEEEEEGQGQEEEEEEEEI). E899, D1023, E1051, and V1052 together coordinate Mn(2+). Residues 961–1083 (DDLLILLNQS…GCDVEVCLVK (123 aa)) enclose the VRR-NUC domain.

This sequence belongs to the FAN1 family. Mn(2+) is required as a cofactor. Mg(2+) serves as cofactor.

It catalyses the reaction Hydrolytically removes 5'-nucleotides successively from the 3'-hydroxy termini of 3'-hydroxy-terminated oligonucleotides.. Nuclease required for the repair of DNA interstrand cross-links (ICL). Acts as a 5'-3' exonuclease that anchors at a cut end of DNA and cleaves DNA successively at every third nucleotide, allowing to excise an ICL from one strand through flanking incisions. This is Fanconi-associated nuclease 1 homolog (mtmr15) from Dictyostelium discoideum (Social amoeba).